The following is a 267-amino-acid chain: 5'-nucleotidase SurE (267 aa).

A divalent metal cation contacts are provided by D14, D15, S45, and N100.

It belongs to the SurE nucleotidase family. It depends on a divalent metal cation as a cofactor.

It localises to the cytoplasm. The enzyme catalyses a ribonucleoside 5'-phosphate + H2O = a ribonucleoside + phosphate. Functionally, nucleotidase that shows phosphatase activity on nucleoside 5'-monophosphates. This Methanosarcina barkeri (strain Fusaro / DSM 804) protein is 5'-nucleotidase SurE.